The sequence spans 891 residues: Kinesin-like protein KIN-UB (891 aa).

Residues 1-54 (MSGKVANATPKAAAGKPRLSAAGGGAYRRTSSGPLPSAGGGGGRASSESGVSSR) are disordered. The span at 45–54 (ASSESGVSSR) shows a compositional bias: low complexity. Positions 54–400 (RVRVAVRLRP…IMFGQRAMKV (347 aa)) constitute a Kinesin motor domain. 139–146 (GQTGTGKT) serves as a coordination point for ATP. A D-BOX motif is present at residues 370–378 (RTSLVVTIG). Residues 502–592 (TSSEVGEVQN…ADETRRSLDR (91 aa)) adopt a coiled-coil conformation. Residues 586 to 595 (TRRSLDRGDG) show a composition bias toward basic and acidic residues. The interval 586-626 (TRRSLDRGDGSGKIFPGFDSLMSHSRNSQPREQSNGPKPPI) is disordered. Polar residues predominate over residues 607-621 (MSHSRNSQPREQSNG). ARM repeat units lie at residues 623–662 (KPPI…NLAA), 664–704 (EANQ…NLAM), 706–746 (ETNQ…NLCG), and 748–787 (DKLQ…NFAK).

It belongs to the TRAFAC class myosin-kinesin ATPase superfamily. Kinesin family. Ungrouped subfamily.

Its subcellular location is the cytoplasm. The protein localises to the cytoskeleton. The sequence is that of Kinesin-like protein KIN-UB from Oryza sativa subsp. japonica (Rice).